A 432-amino-acid chain; its full sequence is Enolase 1 (432 aa).

A (2R)-2-phosphoglycerate-binding site is contributed by Gln-163. Catalysis depends on Glu-205, which acts as the Proton donor. 3 residues coordinate Mg(2+): Asp-242, Glu-287, and Asp-314. Positions 339, 368, 369, and 390 each coordinate (2R)-2-phosphoglycerate. The Proton acceptor role is filled by Lys-339.

Belongs to the enolase family. It depends on Mg(2+) as a cofactor.

Its subcellular location is the cytoplasm. The protein resides in the secreted. It localises to the cell surface. It catalyses the reaction (2R)-2-phosphoglycerate = phosphoenolpyruvate + H2O. It participates in carbohydrate degradation; glycolysis; pyruvate from D-glyceraldehyde 3-phosphate: step 4/5. Its function is as follows. Catalyzes the reversible conversion of 2-phosphoglycerate (2-PG) into phosphoenolpyruvate (PEP). It is essential for the degradation of carbohydrates via glycolysis. The protein is Enolase 1 of Lactobacillus johnsonii (strain CNCM I-12250 / La1 / NCC 533).